Here is a 328-residue protein sequence, read N- to C-terminus: Twinfilin (328 aa).

Positions 1–137 constitute an ADF-H 1 domain; the sequence is MSASVELKPT…DYQQIMKSLS (137 aa). Serine 143 is modified (phosphoserine). The 132-residue stretch at 173 to 304 folds into the ADF-H 2 domain; that stretch reads GVAMSIDDKA…TEKEILHAAG (132 aa). Residues 302–328 are disordered; it reads AAGISSPQAETSTTKTGFSRPRPPRRR. The span at 306–318 shows a compositional bias: polar residues; sequence SSPQAETSTTKTG.

This sequence belongs to the actin-binding proteins ADF family. Twinfilin subfamily. In terms of assembly, interacts with G-actin; ADP-actin form.

It is found in the cytoplasm. The protein localises to the cytoskeleton. Actin-binding protein involved in motile and morphological processes. Inhibits actin polymerization, likely by sequestering G-actin. Prevents actin filament assembly by forming a 1:1 complex with actin monomers, and inhibits the nucleotide exchange reaction of actin monomers. The chain is Twinfilin (twf1) from Schizosaccharomyces pombe (strain 972 / ATCC 24843) (Fission yeast).